Here is a 235-residue protein sequence, read N- to C-terminus: Phosphoribosylaminoimidazole-succinocarboxamide synthase (235 aa).

Belongs to the SAICAR synthetase family.

The catalysed reaction is 5-amino-1-(5-phospho-D-ribosyl)imidazole-4-carboxylate + L-aspartate + ATP = (2S)-2-[5-amino-1-(5-phospho-beta-D-ribosyl)imidazole-4-carboxamido]succinate + ADP + phosphate + 2 H(+). It functions in the pathway purine metabolism; IMP biosynthesis via de novo pathway; 5-amino-1-(5-phospho-D-ribosyl)imidazole-4-carboxamide from 5-amino-1-(5-phospho-D-ribosyl)imidazole-4-carboxylate: step 1/2. This Streptococcus pneumoniae (strain 70585) protein is Phosphoribosylaminoimidazole-succinocarboxamide synthase.